Consider the following 276-residue polypeptide: NH(3)-dependent NAD(+) synthetase (276 aa).

Residue 46–53 (GISGGQDS) participates in ATP binding. D52 contacts Mg(2+). R140 contributes to the deamido-NAD(+) binding site. T160 contacts ATP. E165 contributes to the Mg(2+) binding site. Residues K173 and D180 each contribute to the deamido-NAD(+) site. ATP contacts are provided by K189 and T211. 260-261 (HK) lines the deamido-NAD(+) pocket.

Belongs to the NAD synthetase family. As to quaternary structure, homodimer.

It catalyses the reaction deamido-NAD(+) + NH4(+) + ATP = AMP + diphosphate + NAD(+) + H(+). Its pathway is cofactor biosynthesis; NAD(+) biosynthesis; NAD(+) from deamido-NAD(+) (ammonia route): step 1/1. In terms of biological role, catalyzes the ATP-dependent amidation of deamido-NAD to form NAD. Uses ammonia as a nitrogen source. This is NH(3)-dependent NAD(+) synthetase from Citrobacter koseri (strain ATCC BAA-895 / CDC 4225-83 / SGSC4696).